Reading from the N-terminus, the 839-residue chain is Autophagy-related protein 9A (839 aa).

Residues Met-1–Gly-21 are disordered. N-acetylalanine is present on Ala-2. Topologically, residues Ala-2–Cys-61 are cytoplasmic. The Tyrosine-based sorting signal signature appears at Tyr-8 to Leu-11. Phosphoserine occurs at positions 14, 16, and 18. The helical transmembrane segment at Met-62–Val-84 threads the bilayer. Residues Ser-85 to Glu-128 are Lumenal-facing. N-linked (GlcNAc...) asparagine glycosylation is present at Asn-99. A helical membrane pass occupies residues Asn-129–Ile-154. At Cys-155 to Ile-290 the chain is on the cytoplasmic side. An intramembrane segment occupies Leu-291 to Cys-301. The Cytoplasmic segment spans residues Pro-302–Val-319. Residues Leu-320–Gly-328 lie within the membrane without spanning it. The Cytoplasmic portion of the chain corresponds to Ala-329 to Pro-371. Residues Leu-372 to Tyr-397 form a helical membrane-spanning segment. Over Asp-398 to His-406 the chain is Lumenal. A helical transmembrane segment spans residues Val-407–Phe-424. The Cytoplasmic portion of the chain corresponds to Ile-425–Gln-470. Residues Tyr-471–Leu-480 lie within the membrane without spanning it. At Leu-481 to Pro-483 the chain is on the cytoplasmic side. Residues Ile-484–Phe-492 lie within the membrane without spanning it. Residues Cys-493 to Val-839 lie on the Cytoplasmic side of the membrane. 5 positions are modified to phosphoserine: Ser-656, Ser-735, Ser-738, Ser-741, and Ser-828. Disordered stretches follow at residues Ser-656–Val-688 and Gln-719–Val-839. The segment covering Glu-724–Asp-736 has biased composition (basic and acidic residues). Composition is skewed to acidic residues over residues Glu-737–Gly-747 and Val-823–Leu-832.

It belongs to the ATG9 family. As to quaternary structure, homotrimer; forms a homotrimer with a central pore that forms a path between the two membrane leaflets. Interacts (via cytoplasmic its C-terminus) with ATG2A. Interacts with SUPT20H. Interacts (via the tyrosine-based sorting signal motif) with AP4M1; promoting association with the AP-4 complex. Interacts with ARFIP1 and ARFIP2. Interacts with PI4K2A and PI4KB. Interacts with ATG4A; the interaction is direct and promotes ATG9A trafficking. Post-translationally, ufmylated in a DDRGK1 dependent manner.

It localises to the preautophagosomal structure membrane. It is found in the cytoplasmic vesicle. The protein localises to the autophagosome membrane. The protein resides in the golgi apparatus. Its subcellular location is the trans-Golgi network membrane. It localises to the late endosome membrane. It is found in the recycling endosome membrane. The protein localises to the endoplasmic reticulum membrane. The protein resides in the mitochondrion membrane. The catalysed reaction is a 1,2-diacyl-sn-glycero-3-phosphocholine(in) = a 1,2-diacyl-sn-glycero-3-phosphocholine(out). It catalyses the reaction a 1,2-diacyl-sn-glycero-3-phospho-L-serine(in) = a 1,2-diacyl-sn-glycero-3-phospho-L-serine(out). The enzyme catalyses a 1,2-diacyl-sn-glycero-3-phosphoethanolamine(in) = a 1,2-diacyl-sn-glycero-3-phosphoethanolamine(out). Phospholipid scramblase involved in autophagy by mediating autophagosomal membrane expansion. Cycles between the preautophagosomal structure/phagophore assembly site (PAS) and the cytoplasmic vesicle pool and supplies membrane for the growing autophagosome. Lipid scramblase activity plays a key role in preautophagosomal structure/phagophore assembly by distributing the phospholipids that arrive through ATG2 (ATG2A or ATG2B) from the cytoplasmic to the luminal leaflet of the bilayer, thereby driving autophagosomal membrane expansion. Also required to supply phosphatidylinositol 4-phosphate to the autophagosome initiation site by recruiting the phosphatidylinositol 4-kinase beta (PI4KB) in a process dependent on ARFIP2, but not ARFIP1. In addition to autophagy, also plays a role in necrotic cell death. The protein is Autophagy-related protein 9A of Bos taurus (Bovine).